Here is a 293-residue protein sequence, read N- to C-terminus: 4-diphosphocytidyl-2-C-methyl-D-erythritol kinase (293 aa).

Lysine 16 is an active-site residue. Residue 99–109 (PMGAGLGGGSS) participates in ATP binding. Aspartate 141 is a catalytic residue.

This sequence belongs to the GHMP kinase family. IspE subfamily.

The enzyme catalyses 4-CDP-2-C-methyl-D-erythritol + ATP = 4-CDP-2-C-methyl-D-erythritol 2-phosphate + ADP + H(+). It functions in the pathway isoprenoid biosynthesis; isopentenyl diphosphate biosynthesis via DXP pathway; isopentenyl diphosphate from 1-deoxy-D-xylulose 5-phosphate: step 3/6. Its function is as follows. Catalyzes the phosphorylation of the position 2 hydroxy group of 4-diphosphocytidyl-2C-methyl-D-erythritol. The protein is 4-diphosphocytidyl-2-C-methyl-D-erythritol kinase of Paraburkholderia phymatum (strain DSM 17167 / CIP 108236 / LMG 21445 / STM815) (Burkholderia phymatum).